The following is a 454-amino-acid chain: Cysteine--tRNA ligase (454 aa).

Position 27 (Cys27) interacts with Zn(2+). A 'HIGH' region motif is present at residues 29–39 (PTVQDHFHIGH). Positions 207, 232, and 236 each coordinate Zn(2+). The short motif at 265 to 269 (KMSKS) is the 'KMSKS' region element. An ATP-binding site is contributed by Lys268.

Belongs to the class-I aminoacyl-tRNA synthetase family. The cofactor is Zn(2+).

The protein localises to the cytoplasm. The enzyme catalyses tRNA(Cys) + L-cysteine + ATP = L-cysteinyl-tRNA(Cys) + AMP + diphosphate. The polypeptide is Cysteine--tRNA ligase (Thermoplasma volcanium (strain ATCC 51530 / DSM 4299 / JCM 9571 / NBRC 15438 / GSS1)).